The primary structure comprises 1224 residues: ATP-dependent helicase/deoxyribonuclease subunit B (1224 aa).

The region spanning 1–326 (MSLRFILGRA…VCAAANRRSE (326 aa)) is the UvrD-like helicase ATP-binding domain. An ATP-binding site is contributed by 8-15 (GRAGTGKS). The 302-residue stretch at 283-584 (QSAPRFQHPE…KLSLIPPELD (302 aa)) folds into the UvrD-like helicase C-terminal domain. [4Fe-4S] cluster is bound by residues Cys-841, Cys-1176, Cys-1179, and Cys-1185.

The protein belongs to the helicase family. AddB/RexB type 1 subfamily. In terms of assembly, heterodimer of AddA and AddB. Mg(2+) is required as a cofactor. [4Fe-4S] cluster serves as cofactor.

In terms of biological role, the heterodimer acts as both an ATP-dependent DNA helicase and an ATP-dependent, dual-direction single-stranded exonuclease. Recognizes the chi site generating a DNA molecule suitable for the initiation of homologous recombination. The AddB subunit has 5' -&gt; 3' nuclease activity but not helicase activity. The chain is ATP-dependent helicase/deoxyribonuclease subunit B from Heliobacterium modesticaldum (strain ATCC 51547 / Ice1).